A 310-amino-acid chain; its full sequence is Glutaminase (310 aa).

Serine 66, asparagine 117, glutamate 161, asparagine 168, tyrosine 192, tyrosine 244, and valine 262 together coordinate substrate.

This sequence belongs to the glutaminase family. In terms of assembly, homotetramer.

The enzyme catalyses L-glutamine + H2O = L-glutamate + NH4(+). The sequence is that of Glutaminase from Desulfovibrio desulfuricans (strain ATCC 27774 / DSM 6949 / MB).